The following is a 269-amino-acid chain: Cytochrome c oxidase subunit 3 (269 aa).

Transmembrane regions (helical) follow at residues 21 to 41 (PWPM…GLTA), 49 to 69 (MFML…FKDI), 90 to 110 (GFLM…WAFL), 132 to 152 (ISAA…GVTM), 167 to 187 (TLYG…FQGL), 205 to 225 (FFAL…MLAM), and 247 to 267 (ILYL…VYWW).

This sequence belongs to the cytochrome c oxidase subunit 3 family. Component of the cytochrome c oxidase (complex IV, CIV), a multisubunit enzyme composed of a catalytic core of 3 subunits and several supernumerary subunits. The complex exists as a monomer or a dimer and forms supercomplexes (SCs) in the inner mitochondrial membrane with ubiquinol-cytochrome c oxidoreductase (cytochrome b-c1 complex, complex III, CIII).

The protein localises to the mitochondrion inner membrane. It catalyses the reaction 4 Fe(II)-[cytochrome c] + O2 + 8 H(+)(in) = 4 Fe(III)-[cytochrome c] + 2 H2O + 4 H(+)(out). Its function is as follows. Component of the cytochrome c oxidase, the last enzyme in the mitochondrial electron transport chain which drives oxidative phosphorylation. The respiratory chain contains 3 multisubunit complexes succinate dehydrogenase (complex II, CII), ubiquinol-cytochrome c oxidoreductase (cytochrome b-c1 complex, complex III, CIII) and cytochrome c oxidase (complex IV, CIV), that cooperate to transfer electrons derived from NADH and succinate to molecular oxygen, creating an electrochemical gradient over the inner membrane that drives transmembrane transport and the ATP synthase. Cytochrome c oxidase is the component of the respiratory chain that catalyzes the reduction of oxygen to water. Electrons originating from reduced cytochrome c in the intermembrane space (IMS) are transferred via the dinuclear copper A center (CU(A)) of subunit 2 and heme A of subunit 1 to the active site in subunit 1, a binuclear center (BNC) formed by heme A3 and copper B (CU(B)). The BNC reduces molecular oxygen to 2 water molecules using 4 electrons from cytochrome c in the IMS and 4 protons from the mitochondrial matrix. In Debaryomyces hansenii (strain ATCC 36239 / CBS 767 / BCRC 21394 / JCM 1990 / NBRC 0083 / IGC 2968) (Yeast), this protein is Cytochrome c oxidase subunit 3 (COX3).